We begin with the raw amino-acid sequence, 2540 residues long: Probable JmjC domain-containing histone demethylation protein 2C (2540 aa).

Residues 278–309 (TRAQANSPRPAMNSQAAVPKQNTHQQQQQRSI) are compositionally biased toward polar residues. Residues 278–478 (TRAQANSPRP…TVSDHNSNDL (201 aa)) form a disordered region. Ser317 and Ser320 each carry phosphoserine. Basic and acidic residues predominate over residues 323 to 342 (DEEKMKEEKYDYISRGENPK). Positions 343 to 353 (GKNKHLMNKRR) are enriched in basic residues. A compositionally biased stretch (basic and acidic residues) spans 354 to 371 (KPEEDEKKLNMKRLRTDN). 2 positions are modified to phosphoserine: Ser373 and Ser376. The span at 373–382 (SDFSESSDSE) shows a compositional bias: low complexity. Composition is skewed to basic and acidic residues over residues 383–403 (NSNK…ELKN), 410–427 (NGEE…EETL), and 438–452 (QEDK…RKSV). A compositionally biased stretch (polar residues) spans 464–478 (SSEQSTVSDHNSNDL). A phosphoserine mark is found at Ser475 and Ser501. Thr505 is subject to Phosphothreonine. Phosphoserine is present on residues Ser601, Ser617, Ser638, Ser639, Ser641, Ser652, and Ser943. The interval 631–656 (VDTHKIKSSPSPEVVKPKITHSPDSV) is disordered. Disordered stretches follow at residues 1242–1263 (GKVQ…SQAN) and 1614–1692 (NRRK…NSNT). Residues 1643 to 1652 (KRQPKPTYKK) are compositionally biased toward basic residues. A compositionally biased stretch (basic and acidic residues) spans 1653–1669 (KQNDLQKRKGEIEEDLK). The C6-type zinc-finger motif lies at 1846-1871 (CDACEATLFNIHWVCQKCGFVVCLDC). The segment covering 1971 to 1991 (PESQQQNTPPKSEKNGGSSPE) has biased composition (polar residues). The tract at residues 1971–2064 (PESQQQNTPP…LVSQNNEQGS (94 aa)) is disordered. Ser1989 carries the post-translational modification Phosphoserine. The segment covering 2016 to 2043 (AEQKAREEKKENKELTLENQIKEEREQD) has biased composition (basic and acidic residues). Over residues 2045 to 2064 (SESPNGRTSPLVSQNNEQGS) the composition is skewed to polar residues. Positions 2066 to 2070 (LRDLL) match the LXXLL motif motif. Glycyl lysine isopeptide (Lys-Gly) (interchain with G-Cter in SUMO2) cross-links involve residues Lys2132 and Lys2136. The region spanning 2274 to 2498 (MPARYEDLLK…ESFHLTQELR (225 aa)) is the JmjC domain. Fe cation-binding residues include His2336, Glu2338, and His2466.

Belongs to the JHDM2 histone demethylase family. Interacts specifically with the ligand-binding domain of the thyroid receptor (TR). Requires the presence of thyroid hormone for its interaction. Requires Fe(2+) as cofactor.

It localises to the nucleus. Probable histone demethylase that specifically demethylates 'Lys-9' of histone H3, thereby playing a central role in histone code. Demethylation of Lys residue generates formaldehyde and succinate. May be involved in hormone-dependent transcriptional activation, by participating in recruitment to androgen-receptor target genes. This chain is Probable JmjC domain-containing histone demethylation protein 2C (JMJD1C), found in Homo sapiens (Human).